We begin with the raw amino-acid sequence, 420 residues long: Histidine--tRNA ligase (420 aa).

Belongs to the class-II aminoacyl-tRNA synthetase family. As to quaternary structure, homodimer.

It localises to the cytoplasm. The enzyme catalyses tRNA(His) + L-histidine + ATP = L-histidyl-tRNA(His) + AMP + diphosphate + H(+). This chain is Histidine--tRNA ligase, found in Acholeplasma laidlawii (strain PG-8A).